The primary structure comprises 527 residues: (3S)-3-amino-3-(3-chloro-4-hydroxyphenyl)propanoyl-[peptidyl-carrier protein SgcC2] monooxygenase (527 aa).

Residues 1–10 (MPHGAEREAS) show a composition bias toward basic and acidic residues. The disordered stretch occupies residues 1 to 22 (MPHGAEREASPAEESAGTRPLT). Residues 161 to 163 (HAF), 167 to 170 (PVDR), and T202 contribute to the FAD site.

This sequence belongs to the FADH(2)-utilizing monooxygenase family. As to quaternary structure, homotetramer.

It carries out the reaction (3S)-3-amino-3-(3-chloro-4-hydroxyphenyl)propanoyl-[SgcC2 peptidyl-carrier protein] + FADH2 + O2 = (3S)-3-amino-3-(3-chloro-4,5-dihydroxyphenyl)propanoyl-[SgcC2 peptidyl-carrier protein] + FAD + H2O + H(+). It functions in the pathway antibiotic biosynthesis. Its activity is regulated as follows. The SgcE6-SgcC hydroxylation activity decreases in the presence of excess FAD. In terms of biological role, oxygenase component of a two-component system involved in the biosynthesis of the enediyne antitumor antibiotic C-1027. Uses FADH(2) supplied by SgcE6 to catalyze the C-5 hydroxylation of (S)-3-chloro-beta-tyrosyl-S-SgcC2. Can also efficiently catalyze the regioselective hydroxylation of other 3-substituted beta-tyrosyl-S-SgcC2 analogs, including the bromo-, iodo-, fluoro-, and methyl-substituted analogs, but does not accept 3-hydroxy-beta-tyrosyl-S-SgcC2 as a substrate. Is only active with SgcC2 (peptidyl carrier protein)-tethered substrates. The chain is (3S)-3-amino-3-(3-chloro-4-hydroxyphenyl)propanoyl-[peptidyl-carrier protein SgcC2] monooxygenase from Streptomyces globisporus.